The sequence spans 55 residues: Large ribosomal subunit protein bL33 (55 aa).

Belongs to the bacterial ribosomal protein bL33 family.

The protein is Large ribosomal subunit protein bL33 of Wigglesworthia glossinidia brevipalpis.